The chain runs to 165 residues: MNGRKDEELKDLTLLGNQGTTYSFTYDPNLLEVFDNKHPDRDYFVKFNCPEFTSLCPKTRQPDFATIYISYIPDKKCVESKSLKLYLFSFRNHGDFHEDCVNIIMNDLINVMEPRYIEVWGKFTPRGGISIDPYCNWGRPGTKYEKMAEYRLLNHDLYPEKIDNR.

Cysteine 56 functions as the Thioimide intermediate in the catalytic mechanism. Catalysis depends on aspartate 63, which acts as the Proton donor. Substrate is bound by residues 78-80 and 97-98; these read VES and HE.

It belongs to the GTP cyclohydrolase I family. QueF type 1 subfamily.

It is found in the cytoplasm. It carries out the reaction 7-aminomethyl-7-carbaguanine + 2 NADP(+) = 7-cyano-7-deazaguanine + 2 NADPH + 3 H(+). The protein operates within tRNA modification; tRNA-queuosine biosynthesis. In terms of biological role, catalyzes the NADPH-dependent reduction of 7-cyano-7-deazaguanine (preQ0) to 7-aminomethyl-7-deazaguanine (preQ1). The protein is NADPH-dependent 7-cyano-7-deazaguanine reductase of Geobacillus thermodenitrificans (strain NG80-2).